Consider the following 99-residue polypeptide: Indole-3-acetic acid-induced protein ARG2 (99 aa).

Residues 40 to 62 are disordered; that stretch reads RGGASIGGNMVPKSGEEKVRGGE. Over residues 53–62 the composition is skewed to basic and acidic residues; the sequence is SGEEKVRGGE.

The polypeptide is Indole-3-acetic acid-induced protein ARG2 (ARG2) (Vigna radiata var. radiata (Mung bean)).